A 238-amino-acid polypeptide reads, in one-letter code: tRNA (guanine-N(7)-)-methyltransferase (238 aa).

The segment covering Met1 to Asp12 has biased composition (polar residues). Positions Met1–Ser20 are disordered. Positions 70, 95, 122, and 145 each coordinate S-adenosyl-L-methionine. The active site involves Asp145. Substrate is bound by residues Lys149, Asp181, and Thr216 to Glu219.

It belongs to the class I-like SAM-binding methyltransferase superfamily. TrmB family.

It catalyses the reaction guanosine(46) in tRNA + S-adenosyl-L-methionine = N(7)-methylguanosine(46) in tRNA + S-adenosyl-L-homocysteine. The protein operates within tRNA modification; N(7)-methylguanine-tRNA biosynthesis. In terms of biological role, catalyzes the formation of N(7)-methylguanine at position 46 (m7G46) in tRNA. The protein is tRNA (guanine-N(7)-)-methyltransferase of Neisseria gonorrhoeae (strain NCCP11945).